Here is an 89-residue protein sequence, read N- to C-terminus: Large ribosomal subunit protein bL27 (89 aa).

Residues 1 to 26 (MATKKAGGSSKNGRDSAGRRLGLKKS) are disordered.

This sequence belongs to the bacterial ribosomal protein bL27 family.

This is Large ribosomal subunit protein bL27 from Orientia tsutsugamushi (strain Ikeda) (Rickettsia tsutsugamushi).